A 226-amino-acid polypeptide reads, in one-letter code: V-type proton ATPase subunit E 2 (226 aa).

This sequence belongs to the V-ATPase E subunit family. In terms of assembly, V-ATPase is a heteromultimeric enzyme made up of two complexes: the ATP-hydrolytic V1 complex and the proton translocation V0 complex. The V1 complex consists of three catalytic AB heterodimers that form a heterohexamer, three peripheral stalks each consisting of EG heterodimers, one central rotor including subunits D and F, and the regulatory subunits C and H. The proton translocation complex V0 consists of the proton transport subunit a, a ring of proteolipid subunits c9c'', rotary subunit d, subunits e and f, and the accessory subunits ATP6AP1/Ac45 and ATP6AP2/PRR. In terms of tissue distribution, testis specific.

Subunit of the V1 complex of vacuolar(H+)-ATPase (V-ATPase), a multisubunit enzyme composed of a peripheral complex (V1) that hydrolyzes ATP and a membrane integral complex (V0) that translocates protons. V-ATPase is responsible for acidifying and maintaining the pH of intracellular compartments and in some cell types, is targeted to the plasma membrane, where it is responsible for acidifying the extracellular environment. The protein is V-type proton ATPase subunit E 2 (ATP6V1E2) of Homo sapiens (Human).